Here is a 134-residue protein sequence, read N- to C-terminus: ATP synthase epsilon chain (134 aa).

It belongs to the ATPase epsilon chain family. F-type ATPases have 2 components, CF(1) - the catalytic core - and CF(0) - the membrane proton channel. CF(1) has five subunits: alpha(3), beta(3), gamma(1), delta(1), epsilon(1). CF(0) has three main subunits: a, b and c.

It localises to the cellular thylakoid membrane. In terms of biological role, produces ATP from ADP in the presence of a proton gradient across the membrane. The sequence is that of ATP synthase epsilon chain from Prochlorococcus marinus (strain MIT 9301).